Here is a 354-residue protein sequence, read N- to C-terminus: Cyclin-D1-2 (354 aa).

Disordered stretches follow at residues 37–74 (FFQQ…EEEE) and 331–354 (TTAT…RRKM). 2 stretches are compositionally biased toward low complexity: residues 44–66 (PAPA…AGSC) and 331–346 (TTAT…VSSS).

This sequence belongs to the cyclin family. Cyclin D subfamily.

The chain is Cyclin-D1-2 (CYCD1-2) from Oryza sativa subsp. japonica (Rice).